A 137-amino-acid chain; its full sequence is Small ribosomal subunit protein uS9 (137 aa).

Belongs to the universal ribosomal protein uS9 family.

This Sulfurisphaera tokodaii (strain DSM 16993 / JCM 10545 / NBRC 100140 / 7) (Sulfolobus tokodaii) protein is Small ribosomal subunit protein uS9 (rps9).